Here is a 91-residue protein sequence, read N- to C-terminus: Small ribosomal subunit protein uS15c (91 aa).

This sequence belongs to the universal ribosomal protein uS15 family. Part of the 30S ribosomal subunit.

The protein resides in the plastid. It is found in the chloroplast. The protein is Small ribosomal subunit protein uS15c (rps15) of Adiantum capillus-veneris (Maidenhair fern).